The chain runs to 412 residues: MASSIPNAPSAFNSQSYVGLRAPLRTFNFSSPQAAKIPRSQRLFVVRASDSEFEAAVVAGKVPPAPPVRPRPAAPVGTPVVPSLPLHRRPRRNRKSPALRSAFQETSISPANFVYPLFIHEGEEDTPIGAMPGCYRLGWRHGLVEEVAKARDVGVNSVVLFPKIPDALKSPTGDEAYNENGLVPRTIRLLKDKYPDLVIYTDVALDPYSSDGHDGIVREDGVIMNDETVHQLCKQAVAQAQAGADVVSPSDMMDGRVGALRAALDAEGFQHVSIMSYTAKYASSFYGPFREALDSNPRFGDKKTYQMNPANYREALTEMREDESEGADILLVKPGLPYLDIIRLLRDNSPLPIAAYQVSGEYAMIKAAGALKMIDEEKVMMESLMCLRRAGADIILTYSALQAARCLCGEKR.

The N-terminal 48 residues, 1-48 (MASSIPNAPSAFNSQSYVGLRAPLRTFNFSSPQAAKIPRSQRLFVVRA), are a transit peptide targeting the chloroplast. Positions 68 to 101 (VRPRPAAPVGTPVVPSLPLHRRPRRNRKSPALRS) are disordered. Basic residues predominate over residues 86 to 97 (LHRRPRRNRKSP). K280 acts as the Schiff-base intermediate with substrate in catalysis. Positions 290 and 302 each coordinate 5-aminolevulinate. E318 is a binding site for Mg(2+). Residue K333 is the Schiff-base intermediate with substrate of the active site. 5-aminolevulinate is bound by residues S359 and Y398.

It belongs to the ALAD family. As to quaternary structure, homooctamer. Requires Mg(2+) as cofactor. Leaves and root nodules.

Its subcellular location is the plastid. The protein resides in the chloroplast. The enzyme catalyses 2 5-aminolevulinate = porphobilinogen + 2 H2O + H(+). Its pathway is porphyrin-containing compound metabolism; protoporphyrin-IX biosynthesis; coproporphyrinogen-III from 5-aminolevulinate: step 1/4. Is committed to plant tetrapyrrole synthesis. Its function is as follows. Catalyzes an early step in the biosynthesis of tetrapyrroles. Binds two molecules of 5-aminolevulinate per subunit, each at a distinct site, and catalyzes their condensation to form porphobilinogen. The sequence is that of Delta-aminolevulinic acid dehydratase, chloroplastic (HEMB) from Glycine max (Soybean).